We begin with the raw amino-acid sequence, 151 residues long: Pyruvoyl-dependent arginine decarboxylase (151 aa).

Ser42 carries the pyruvic acid (Ser) modification.

It belongs to the PdaD family. It depends on pyruvate as a cofactor.

The enzyme catalyses L-arginine + H(+) = agmatine + CO2. The polypeptide is Pyruvoyl-dependent arginine decarboxylase (Methanothermobacter thermautotrophicus (strain ATCC 29096 / DSM 1053 / JCM 10044 / NBRC 100330 / Delta H) (Methanobacterium thermoautotrophicum)).